The sequence spans 242 residues: tRNA pseudouridine synthase A (242 aa).

Residue Asp-51 is the Nucleophile of the active site. Tyr-107 lines the substrate pocket.

Belongs to the tRNA pseudouridine synthase TruA family. Homodimer.

The catalysed reaction is uridine(38/39/40) in tRNA = pseudouridine(38/39/40) in tRNA. Formation of pseudouridine at positions 38, 39 and 40 in the anticodon stem and loop of transfer RNAs. This is tRNA pseudouridine synthase A from Helicobacter pylori (strain P12).